The sequence spans 139 residues: Mitochondrial intermembrane space import and assembly protein 40 (139 aa).

Disulfide bonds link Cys53–Cys55, Cys64–Cys97, and Cys74–Cys87. A CHCH domain is found at Ser61–Tyr105. Short sequence motifs (cx9C motif) lie at residues Cys64 to Cys74 and Cys87 to Cys97. The interval Pro102–Ser139 is disordered. Acidic residues predominate over residues Pro106–Thr124.

In terms of assembly, monomer. Can form homooligomers. Interacts with GFER and forms transient disulfide bonds with GFER. Interacts with MICU1. Interacts with COX19 forming transient intermolecular disulfide bridges. Interacts with COA7 through transient intermolecular disulfide bonds. Interacts with AIFM1; the interaction increases in presence of NADH. Interacts with NDUFB10. Forms intrachain disulfide bridges, but exists in different redox states. Widely expressed. Present at high level in liver and kidney, followed by lung, brain, heart and spleen (at protein level).

The protein resides in the mitochondrion intermembrane space. Its function is as follows. Central component of a redox-sensitive mitochondrial intermembrane space import machinery which is required for the biogenesis of respiratory chain complexes. Functions as chaperone and catalyzes the formation of disulfide bonds in substrate proteins, such as COX17, COX19, MICU1 and COA7. Required for the import and folding of small cysteine-containing proteins (small Tim) in the mitochondrial intermembrane space (IMS). Required for the import of COA7 in the IMS. Precursor proteins to be imported into the IMS are translocated in their reduced form into the mitochondria. The oxidized form of CHCHD4/MIA40 forms a transient intermolecular disulfide bridge with the reduced precursor protein, resulting in oxidation of the precursor protein that now contains an intramolecular disulfide bond and is able to undergo folding in the IMS. Reduced CHCHD4/MIA40 is then reoxidized by GFER/ERV1 via a disulfide relay system. Mediates formation of disulfide bond in MICU1 in the IMS, promoting formation of the MICU1-MICU2 heterodimer that regulates mitochondrial calcium uptake. The protein is Mitochondrial intermembrane space import and assembly protein 40 (Chchd4) of Mus musculus (Mouse).